The chain runs to 65 residues: Vespid chemotactic peptide 5h (65 aa).

An N-terminal signal peptide occupies residues 1–23 (MKYNIVFLFAIIASLACLQLTFA). 7 AXPX repeats span residues 23–26 (AAPA), 27–30 (ASPL), 31–34 (ANPG), 35–38 (ASPD), 39–42 (AAPN), 43–46 (ADPL), and 47–50 (ADPF). Positions 24–49 (APAASPLANPGASPDAAPNADPLADP) are excised as a propeptide. A Leucine amide modification is found at leucine 62.

This sequence belongs to the MCD family. Crabrolin subfamily. In terms of tissue distribution, expressed by the venom gland.

Its subcellular location is the secreted. Functionally, shows antimicrobial activity against the Gram-negative bacteria E.coli ATCC 25922 (MIC=30 ug/ml), the Gram-positive bacteria S.aureus ATCC 2592 (MIC=5 ug/ml) and the fungus C.albicans ATCC 2002 (MIC=25 ug/ml). Acts as a mast cell degranulating peptide. Its mast cell degranulation activity may be related to the activation of G-protein coupled receptors in mast cells as well as interaction with other proteins located in cell endosomal membranes in the mast cells. Induces the chemotaxis of neutrophils. This is Vespid chemotactic peptide 5h from Vespa magnifica (Hornet).